Consider the following 431-residue polypeptide: Adenylosuccinate synthetase (431 aa).

Residues 12-18 and 40-42 each bind GTP; these read GDEGKGK and GHT. Asp13 acts as the Proton acceptor in catalysis. Mg(2+) contacts are provided by Asp13 and Gly40. IMP is bound by residues 13–16, 38–41, Thr130, Arg144, Gln224, Thr239, and Arg303; these read DEGK and NAGH. Residue His41 is the Proton donor of the active site. 299 to 305 serves as a coordination point for substrate; sequence STTGRPR. GTP-binding positions include Arg305, 331–333, and 413–415; these read KAD and SIG.

The protein belongs to the adenylosuccinate synthetase family. As to quaternary structure, homodimer. Requires Mg(2+) as cofactor.

The protein resides in the cytoplasm. The catalysed reaction is IMP + L-aspartate + GTP = N(6)-(1,2-dicarboxyethyl)-AMP + GDP + phosphate + 2 H(+). Its pathway is purine metabolism; AMP biosynthesis via de novo pathway; AMP from IMP: step 1/2. Its function is as follows. Plays an important role in the de novo pathway of purine nucleotide biosynthesis. Catalyzes the first committed step in the biosynthesis of AMP from IMP. The sequence is that of Adenylosuccinate synthetase from Cytophaga hutchinsonii (strain ATCC 33406 / DSM 1761 / CIP 103989 / NBRC 15051 / NCIMB 9469 / D465).